The sequence spans 588 residues: Succinate dehydrogenase flavoprotein subunit (588 aa).

FAD contacts are provided by residues 14-19, 37-52, and D221; these read GAGGAG and SKVF…AQGG. Position 45 is a tele-8alpha-FAD histidine (H45). Substrate contacts are provided by H242 and T254. R286 functions as the Proton acceptor in the catalytic mechanism. H354 is a substrate binding site. E388 serves as a coordination point for FAD. R399 contacts substrate. 404 to 405 is a binding site for FAD; the sequence is SL.

The protein belongs to the FAD-dependent oxidoreductase 2 family. FRD/SDH subfamily. In terms of assembly, part of an enzyme complex containing four subunits: a flavoprotein, an iron-sulfur, cytochrome b-556, and a hydrophobic anchor protein. The cofactor is FAD.

It is found in the cell inner membrane. It catalyses the reaction a quinone + succinate = fumarate + a quinol. It functions in the pathway carbohydrate metabolism; tricarboxylic acid cycle; fumarate from succinate (bacterial route): step 1/1. Functionally, two distinct, membrane-bound, FAD-containing enzymes are responsible for the catalysis of fumarate and succinate interconversion; the fumarate reductase is used in anaerobic growth, and the succinate dehydrogenase is used in aerobic growth. In Salmonella typhimurium (strain LT2 / SGSC1412 / ATCC 700720), this protein is Succinate dehydrogenase flavoprotein subunit (sdhA).